The primary structure comprises 378 residues: Ribosomal RNA large subunit methyltransferase G (378 aa).

It belongs to the methyltransferase superfamily. RlmG family.

Its subcellular location is the cytoplasm. The catalysed reaction is guanosine(1835) in 23S rRNA + S-adenosyl-L-methionine = N(2)-methylguanosine(1835) in 23S rRNA + S-adenosyl-L-homocysteine + H(+). Its function is as follows. Specifically methylates the guanine in position 1835 (m2G1835) of 23S rRNA. The sequence is that of Ribosomal RNA large subunit methyltransferase G from Shigella boydii serotype 4 (strain Sb227).